Here is a 163-residue protein sequence, read N- to C-terminus: Lectin-like protein EP153R (163 aa).

The Cytoplasmic portion of the chain corresponds to 1–26 (MFSNKKYIGLINKKEGLKKKIDDYSI). The helical transmembrane segment at 27 to 47 (LIIGILIGTNILSLIINIIGE) threads the bilayer. The Extracellular segment spans residues 48 to 163 (INKPICYQNN…YTDLLFICSK (116 aa)). A disulfide bridge links C63 with C74. The segment at 63–162 (CPKDWVGYNN…HYTDLLFICS (100 aa)) is lectin-like. N-linked (GlcNAc...) asparagine; by host glycans are attached at residues N84, N96, N97, N103, N109, N115, N129, and N135. An intrachain disulfide couples C92 to C161.

It belongs to the asfivirus lectin-like protein family. Homodimer.

The protein resides in the host endoplasmic reticulum membrane. In terms of biological role, down-regulates MHC-I expression by impairing the appropriate configuration or presentation into the plasma membrane of the latter. Participates in viral hemadsorption, which may help viral spread. Reduces the transactivating activity of host TP53, thus inhibiting apoptosis. Non-essential for virus growth in swine macrophage cell cultures. This African swine fever virus (isolate Warthog/Namibia/Wart80/1980) (ASFV) protein is Lectin-like protein EP153R.